Here is a 169-residue protein sequence, read N- to C-terminus: GTP-dependent dephospho-CoA kinase (169 aa).

Positions 45, 64, 66, and 121 each coordinate GTP.

The protein belongs to the GTP-dependent DPCK family.

The catalysed reaction is 3'-dephospho-CoA + GTP = GDP + CoA + H(+). Its pathway is cofactor biosynthesis; coenzyme A biosynthesis. In terms of biological role, catalyzes the GTP-dependent phosphorylation of the 3'-hydroxyl group of dephosphocoenzyme A to form coenzyme A (CoA). The polypeptide is GTP-dependent dephospho-CoA kinase (Methanosphaera stadtmanae (strain ATCC 43021 / DSM 3091 / JCM 11832 / MCB-3)).